The chain runs to 1284 residues: Putative late blight resistance protein homolog R1B-16 (1284 aa).

Residues 533–555 (PRMNEEIVGFKDVIENLRNQLLN) adopt a coiled-coil conformation. Residues 534–821 (RMNEEIVGFK…SESFIKSSEG (288 aa)) enclose the NB-ARC domain. Position 567-574 (567-574 (GMPGLGKT)) interacts with ATP. 8 LRR repeats span residues 942–966 (FKFL…LFYL), 985–1010 (LWNL…VWDM), 1013–1036 (LRHL…SAKL), 1085–1107 (PIRL…FCIS), 1108–1135 (APNL…HLKN), 1159–1181 (FPQL…ADDA), 1182–1206 (FPNL…FMDI), and 1219–1243 (ESVV…NFKL). An HMA domain is found at 1217–1284 (CNESVVKSAM…VEKQRKRGML (68 aa)).

The protein belongs to the disease resistance NB-LRR family.

The protein localises to the cytoplasm. It is found in the membrane. Functionally, confers resistance to late blight (Phytophthora infestans) races carrying the avirulence gene Avr1. Resistance proteins guard the plant against pathogens that contain an appropriate avirulence protein via an indirect interaction with this avirulence protein. That triggers a defense system including the hypersensitive response, which restricts the pathogen growth. This chain is Putative late blight resistance protein homolog R1B-16 (R1B-16), found in Solanum demissum (Wild potato).